The chain runs to 525 residues: Sucrose transport protein (525 aa).

Over 1-37 (MAGRNIKNGENNKIAGSSLHLEKNPTTPPEAEATLKK) the chain is Cytoplasmic. Helical transmembrane passes span 38-58 (LGLV…QLSL), 72-92 (WAAY…PLVG), 107-127 (PFIA…GFAA), 145-165 (AIAV…TLQG), 184-204 (YANA…YAAG), 230-250 (SCFF…LSVV), 295-315 (MLIL…FLLF), 338-358 (GVHA…VMSL), 373-393 (LWGI…LVTK), 422-442 (LAIF…PFAL), 455-475 (GLSL…VSVT), and 488-508 (LPAF…SFTL). Topologically, residues 509 to 525 (LPSPPPEAKIGGSMGGH) are cytoplasmic.

Belongs to the glycoside-pentoside-hexuronide (GPH) cation symporter transporter (TC 2.A.2.4) family.

It localises to the membrane. The protein operates within glycan biosynthesis; sucrose metabolism. In terms of biological role, responsible for the transport of sucrose into the cell, with the concomitant uptake of protons (symport system). Can also transport maltose at a lesser rate. This Spinacia oleracea (Spinach) protein is Sucrose transport protein.